The sequence spans 103 residues: MSNKFGVITNDIQPIGTNNKNVENIKNRQDGLDFIKTLKDSIQDVNTEQQTSEKALADIASGQVKDLHQAAIAINRAENSMKVMLEVRNKAINAYKEILRTQI.

This sequence belongs to the FliE family.

The protein localises to the bacterial flagellum basal body. This Helicobacter hepaticus (strain ATCC 51449 / 3B1) protein is Flagellar hook-basal body complex protein FliE.